The chain runs to 157 residues: 3-dehydroquinate dehydratase (157 aa).

The active-site Proton acceptor is the tyrosine 24. Residues asparagine 75, histidine 81, and aspartate 88 each coordinate substrate. The Proton donor role is filled by histidine 101. Substrate-binding positions include 102 to 103 and arginine 112; that span reads LS.

Belongs to the type-II 3-dehydroquinase family. As to quaternary structure, homododecamer.

The enzyme catalyses 3-dehydroquinate = 3-dehydroshikimate + H2O. It participates in metabolic intermediate biosynthesis; chorismate biosynthesis; chorismate from D-erythrose 4-phosphate and phosphoenolpyruvate: step 3/7. Its function is as follows. Catalyzes a trans-dehydration via an enolate intermediate. This is 3-dehydroquinate dehydratase from Brucella abortus (strain S19).